The primary structure comprises 136 residues: Blasticidin-S acetyltransferase (136 aa).

The region spanning 1–136 is the N-acetyltransferase domain; the sequence is MLSLPRLQTV…ITSHLLVKEL (136 aa).

In terms of biological role, confers resistance to blasticidin S antibiotic. This is Blasticidin-S acetyltransferase (bls) from Streptomyces morookaense (Streptoverticillium morookaense).